A 365-amino-acid chain; its full sequence is MDNYEFSELLKTLKNKVGNIASIIKPENIQTRLKEIEELENSPSFWSDVKQAGIIGKEKTKITNLLKNYENAFNALNDASELFDLANSENDTETLEALFNDAPKLEDTITSLEISMLLSGENDGKNAIVSIHPGAGGTESNDWASILYRMYLRFCEREGFKVETLDFQEGEEAGLKDVSFLVKGENAYGYLKAENGIHRLVRTSPFDSAGRRHTSFSSVMVSPELDDDIEIEIEEKDIRIDYYRASGAGGQHVNKTESAVRITHFPTGIVVQCQNDRSQHKNKATAFKMLKSRLYELELMKQQDSANAGEKSEIGWGHQIRSYVLFPYQQVKDNRSGEAFSQVDNILDGDIKKMIEGVLIALKAE.

Position 251 is an N5-methylglutamine (Q251).

This sequence belongs to the prokaryotic/mitochondrial release factor family. In terms of processing, methylated by PrmC. Methylation increases the termination efficiency of RF2.

The protein localises to the cytoplasm. Its function is as follows. Peptide chain release factor 2 directs the termination of translation in response to the peptide chain termination codons UGA and UAA. This Campylobacter jejuni subsp. jejuni serotype O:6 (strain 81116 / NCTC 11828) protein is Peptide chain release factor 2.